Consider the following 138-residue polypeptide: 1,4-dihydroxy-2-naphthoyl-CoA hydrolase (138 aa).

Residue Asp-14 is part of the active site.

It belongs to the 4-hydroxybenzoyl-CoA thioesterase family. DHNA-CoA hydrolase subfamily.

The catalysed reaction is 1,4-dihydroxy-2-naphthoyl-CoA + H2O = 1,4-dihydroxy-2-naphthoate + CoA + H(+). It functions in the pathway cofactor biosynthesis; phylloquinone biosynthesis. Its pathway is quinol/quinone metabolism; 1,4-dihydroxy-2-naphthoate biosynthesis; 1,4-dihydroxy-2-naphthoate from chorismate: step 7/7. Catalyzes the hydrolysis of 1,4-dihydroxy-2-naphthoyl-CoA (DHNA-CoA) to 1,4-dihydroxy-2-naphthoate (DHNA), a reaction involved in phylloquinone (vitamin K1) biosynthesis. This is 1,4-dihydroxy-2-naphthoyl-CoA hydrolase from Rippkaea orientalis (strain PCC 8801 / RF-1) (Cyanothece sp. (strain PCC 8801)).